The chain runs to 521 residues: GMP synthase [glutamine-hydrolyzing] (521 aa).

Positions 8–203 (KILILDFGAQ…VVDVCGCQTL (196 aa)) constitute a Glutamine amidotransferase type-1 domain. The Nucleophile role is filled by Cys-85. Active-site residues include His-177 and Glu-179. The 193-residue stretch at 204–396 (WTAANIIDDQ…LGLPRTMVYR (193 aa)) folds into the GMPS ATP-PPase domain. 231-237 (SGGVDSS) contacts ATP.

In terms of assembly, homodimer.

It carries out the reaction XMP + L-glutamine + ATP + H2O = GMP + L-glutamate + AMP + diphosphate + 2 H(+). It functions in the pathway purine metabolism; GMP biosynthesis; GMP from XMP (L-Gln route): step 1/1. Functionally, catalyzes the synthesis of GMP from XMP. The polypeptide is GMP synthase [glutamine-hydrolyzing] (Stenotrophomonas maltophilia (strain R551-3)).